Consider the following 547-residue polypeptide: Chaperonin GroEL (547 aa).

Residues 30–33 (TLGP), Lys51, 87–91 (DGTTT), Gly415, and Asp496 contribute to the ATP site.

Belongs to the chaperonin (HSP60) family. As to quaternary structure, forms a cylinder of 14 subunits composed of two heptameric rings stacked back-to-back. Interacts with the co-chaperonin GroES.

The protein localises to the cytoplasm. The catalysed reaction is ATP + H2O + a folded polypeptide = ADP + phosphate + an unfolded polypeptide.. Together with its co-chaperonin GroES, plays an essential role in assisting protein folding. The GroEL-GroES system forms a nano-cage that allows encapsulation of the non-native substrate proteins and provides a physical environment optimized to promote and accelerate protein folding. The polypeptide is Chaperonin GroEL (Actinobacillus pleuropneumoniae (Haemophilus pleuropneumoniae)).